We begin with the raw amino-acid sequence, 670 residues long: Methionine--tRNA ligase (670 aa).

Residues 14–24 (PYANGHLHLGH) carry the 'HIGH' region motif. Residues Cys-145, Cys-148, Cys-158, and Cys-161 each contribute to the Zn(2+) site. Residues 330 to 334 (KMSKS) carry the 'KMSKS' region motif. Lys-333 is an ATP binding site. The region spanning 570–670 (DFAKVDLRIA…AGAFPGMKVK (101 aa)) is the tRNA-binding domain.

This sequence belongs to the class-I aminoacyl-tRNA synthetase family. MetG type 1 subfamily. As to quaternary structure, homodimer. Requires Zn(2+) as cofactor.

Its subcellular location is the cytoplasm. It carries out the reaction tRNA(Met) + L-methionine + ATP = L-methionyl-tRNA(Met) + AMP + diphosphate. In terms of biological role, is required not only for elongation of protein synthesis but also for the initiation of all mRNA translation through initiator tRNA(fMet) aminoacylation. The chain is Methionine--tRNA ligase from Legionella pneumophila (strain Corby).